The chain runs to 1010 residues: 2-oxoglutarate dehydrogenase-like, mitochondrial (1010 aa).

Residues 1 to 73 constitute a mitochondrion transit peptide; it reads MSQLRLLPSR…RSVHKSWDSF (73 aa). Residues His130, Asp143, and Asp145 each coordinate Ca(2+). Thiamine diphosphate contacts are provided by Arg299, Asp398, Asn431, Ile433, and Gln663. 3 residues coordinate Mg(2+): Asp398, Asn431, and Ile433.

It belongs to the alpha-ketoglutarate dehydrogenase family. The OGDHC complex comprises multiple copies of three catalytic enzyme components, the 2-oxoglutarate dehydrogenase (OGDH/E1), the dihydrolipoamide dehydrogenase (DLST/E2) and the dihydrolipoamide dehydrogenase (DLD/E3). OGDHL/E1-like isoenzyme may replace OGDH in the OGDHC complex in the brain. The presence of either ODGH/E1 or ODGHL/E1-like isoenzyme in the complex may depend on its tissular distribution. The cofactor is thiamine diphosphate. It depends on Mg(2+) as a cofactor.

It localises to the mitochondrion matrix. It catalyses the reaction N(6)-[(R)-lipoyl]-L-lysyl-[protein] + 2-oxoglutarate + H(+) = N(6)-[(R)-S(8)-succinyldihydrolipoyl]-L-lysyl-[protein] + CO2. In terms of biological role, 2-oxoglutarate dehydrogenase (E1-like) component of the 2-oxoglutarate dehydrogenase multienzyme complex (OGDHC) which mediates the decarboxylation of alpha-ketoglutarate in the tricarboxylic acid cycle. The OGDHC complex catalyzes the overall conversion of 2-oxoglutarate to succinyl-CoA and CO(2) while reducing NAD(+) to NADH. The OGDHC complex is mainly active in the mitochondrion. Involved in the inhibition of cell proliferation and in apoptosis. The protein is 2-oxoglutarate dehydrogenase-like, mitochondrial (OGDHL) of Pongo abelii (Sumatran orangutan).